The primary structure comprises 82 residues: RNA-binding protein Hfq (82 aa).

A Sm domain is found at 11 to 71; sequence DTFLNSVRKS…ISTIMPAQPV (61 aa).

It belongs to the Hfq family. In terms of assembly, homohexamer.

RNA chaperone that binds small regulatory RNA (sRNAs) and mRNAs to facilitate mRNA translational regulation in response to envelope stress, environmental stress and changes in metabolite concentrations. Also binds with high specificity to tRNAs. The protein is RNA-binding protein Hfq of Caulobacter sp. (strain K31).